Reading from the N-terminus, the 556-residue chain is Formate--tetrahydrofolate ligase (556 aa).

65–72 (TPAGEGKT) lines the ATP pocket.

It belongs to the formate--tetrahydrofolate ligase family.

It carries out the reaction (6S)-5,6,7,8-tetrahydrofolate + formate + ATP = (6R)-10-formyltetrahydrofolate + ADP + phosphate. Its pathway is one-carbon metabolism; tetrahydrofolate interconversion. In Symbiobacterium thermophilum (strain DSM 24528 / JCM 14929 / IAM 14863 / T), this protein is Formate--tetrahydrofolate ligase.